We begin with the raw amino-acid sequence, 410 residues long: Diguanylate cyclase DgcM (410 aa).

PAS domains follow at residues 3–70 (THNF…NQHD) and 129–198 (GFYA…HLPG). One can recognise a PAC domain in the interval 199–251 (GHKPLNFVHKLADGSTRHVQTYAGPIEIYGDKLMLCIVHDITEQKRLEEQLEH). Positions 283–410 (QDYSLLLIDT…NDGRNRVLAA (128 aa)) constitute a GGDEF domain. Asp291 is a Mg(2+) binding site. Asn299, His304, and Asp308 together coordinate substrate. Glu334 serves as a coordination point for Mg(2+). Glu334 (proton acceptor) is an active-site residue.

As to quaternary structure, forms homodimers and homotetramers. Interacts with PdeR and MlrA. It depends on Mg(2+) as a cofactor.

The enzyme catalyses 2 GTP = 3',3'-c-di-GMP + 2 diphosphate. Its pathway is purine metabolism; 3',5'-cyclic di-GMP biosynthesis. Its activity is regulated as follows. Activity is inhibited by the phosphodiesterase PdeR. Inhibition is relieved by high cellular c-di-GMP levels. Functionally, part of a signaling cascade that regulates curli biosynthesis. The cascade is composed of two cyclic-di-GMP (c-di-GMP) control modules, in which c-di-GMP controlled by the DgcE/PdeH pair (module I) regulates the activity of the DgcM/PdeR pair (module II), which in turn regulates activity of the transcription factor MlrA and expression of the master biofilm regulator csgD. DgcM stimulates activity of MlrA by direct interaction, leading to the transcription of csgD. It also catalyzes the synthesis of c-di-GMP via the condensation of 2 GTP molecules, which contributes to the c-di-GMP pool generated by module I in a positive feedback loop. Production of c-di-GMP contributes to but is not essential for MlrA activation. The chain is Diguanylate cyclase DgcM from Escherichia coli (strain K12).